Consider the following 363-residue polypeptide: Ribosome-binding ATPase YchF (363 aa).

The OBG-type G domain maps to 3–257 (FKCGFVGLPN…VSAYDHLSLK (255 aa)). ATP is bound at residue 12 to 17 (NVGKST). Positions 16 and 36 each coordinate Mg(2+). Residues 278–361 (NLITFFTAGK…CDGDIIHVLY (84 aa)) enclose the TGS domain.

This sequence belongs to the TRAFAC class OBG-HflX-like GTPase superfamily. OBG GTPase family. YchF/OLA1 subfamily. Mg(2+) serves as cofactor.

In terms of biological role, ATPase that binds to both the 70S ribosome and the 50S ribosomal subunit in a nucleotide-independent manner. This is Ribosome-binding ATPase YchF from Buchnera aphidicola subsp. Baizongia pistaciae (strain Bp).